The following is a 631-amino-acid chain: Leucine aminopeptidase 2-2 (631 aa).

Substrate is bound by residues 140–142 (QCQ) and 265–270 (PYGGME). His294 is a Zn(2+) binding site. Glu295 acts as the Proton acceptor in catalysis. Positions 298 and 317 each coordinate Zn(2+). Tyr395 acts as the Proton donor in catalysis.

Belongs to the peptidase M1 family. Zn(2+) is required as a cofactor.

The protein localises to the cytoplasm. It localises to the nucleus. It carries out the reaction an epoxide + H2O = an ethanediol. In terms of biological role, aminopeptidase that preferentially cleaves di- and tripeptides. Also has low epoxide hydrolase activity (in vitro). Can hydrolyze the epoxide leukotriene LTA(4) but it forms preferentially 5,6-dihydroxy-7,9,11,14-eicosatetraenoic acid rather than the cytokine leukotriene B(4) as the product compared to the homologous mammalian enzyme (in vitro). The chain is Leucine aminopeptidase 2-2 from Meyerozyma guilliermondii (strain ATCC 6260 / CBS 566 / DSM 6381 / JCM 1539 / NBRC 10279 / NRRL Y-324) (Yeast).